Reading from the N-terminus, the 342-residue chain is DNA-directed RNA polymerase subunit alpha (342 aa).

The tract at residues 1-238 (MESLNVNAKN…DQLNMFVNFD (238 aa)) is alpha N-terminal domain (alpha-NTD). The tract at residues 254-342 (FNKNLLRKVD…EMSKKLEEQI (89 aa)) is alpha C-terminal domain (alpha-CTD).

The protein belongs to the RNA polymerase alpha chain family. Homodimer. The RNAP catalytic core consists of 2 alpha, 1 beta, 1 beta' and 1 omega subunit. When a sigma factor is associated with the core the holoenzyme is formed, which can initiate transcription.

It catalyses the reaction RNA(n) + a ribonucleoside 5'-triphosphate = RNA(n+1) + diphosphate. Its function is as follows. DNA-dependent RNA polymerase catalyzes the transcription of DNA into RNA using the four ribonucleoside triphosphates as substrates. The sequence is that of DNA-directed RNA polymerase subunit alpha from Pelagibacter ubique (strain HTCC1062).